A 329-amino-acid polypeptide reads, in one-letter code: Mitochondrial substrate carrier family protein W (329 aa).

The Mitochondrial intermembrane portion of the chain corresponds to 1–39 (MTTNNSNDNNKRYGIIKQQLQQQQQQHHQQHEQHSRLVE). 3 Solcar repeats span residues 34–119 (HSRL…CKEL), 133–221 (ESPL…FKSI), and 231–321 (LGIV…IKKF). Residues 40-60 (MTAGCGAGFMASLFTTPLDVI) traverse the membrane as a helical segment. At 61–90 (KTTLQVDNSSNKTIMSTVKSILDRKGGVKN) the chain is on the mitochondrial matrix side. A helical membrane pass occupies residues 91–111 (LYLGLKPTLVGQIPSWAVYFS). Over 112–135 (TYTFCKELFTKENDKHSLLEKESP) the chain is Mitochondrial intermembrane. Residues 136–156 (LIFMTSAIIAGAATSICTSPI) traverse the membrane as a helical segment. Residues 157-193 (WLIKTRFITQEMVGRQKKYRGIVHSMVSIYHEEGFRG) lie on the Mitochondrial matrix side of the membrane. The chain crosses the membrane as a helical span at residues 194–214 (LYKGLGPSLLGVLHVGVQFPL). The Mitochondrial intermembrane segment spans residues 215-230 (YEKFKSILKEKNKNKE). Residues 231–251 (LGIVEIMIASSVSKIIASVVA) form a helical membrane-spanning segment. The Mitochondrial matrix portion of the chain corresponds to 252–296 (YPHEVLRARSQDSSPDSPNRTYRGNIIQMFKQIVREEGWRGLYRG). The chain crosses the membrane as a helical span at residues 297–315 (MGVNLLRVTPSCVITFTSY). Residues 316 to 329 (EYIKKFLSQNQNHF) are Mitochondrial intermembrane-facing.

Belongs to the mitochondrial carrier (TC 2.A.29) family.

The protein localises to the mitochondrion inner membrane. Its function is as follows. Mitochondrial solute carriers shuttle metabolites, nucleotides, and cofactors through the mitochondrial inner membrane. This is Mitochondrial substrate carrier family protein W (mcfW) from Dictyostelium discoideum (Social amoeba).